We begin with the raw amino-acid sequence, 295 residues long: Protoheme IX farnesyltransferase (295 aa).

Transmembrane regions (helical) follow at residues 7-27 (VTKP…FLLA), 34-54 (VPLF…GCVF), 78-98 (LIAP…GIAL), 106-126 (LAAL…SLYM), 131-151 (VYGT…GYCA), 161-181 (LILL…IAIF), 207-227 (ITLY…GGYA), 228-248 (GYKY…MALS), and 263-283 (LFMF…VDFQ).

The protein belongs to the UbiA prenyltransferase family. Protoheme IX farnesyltransferase subfamily.

The protein localises to the cell inner membrane. The catalysed reaction is heme b + (2E,6E)-farnesyl diphosphate + H2O = Fe(II)-heme o + diphosphate. Its pathway is porphyrin-containing compound metabolism; heme O biosynthesis; heme O from protoheme: step 1/1. Functionally, converts heme B (protoheme IX) to heme O by substitution of the vinyl group on carbon 2 of heme B porphyrin ring with a hydroxyethyl farnesyl side group. In Aeromonas salmonicida (strain A449), this protein is Protoheme IX farnesyltransferase.